Consider the following 361-residue polypeptide: DNA replication and repair protein RecF (361 aa).

Position 30–37 (30–37 (GPNGSGKT)) interacts with ATP.

Belongs to the RecF family.

It is found in the cytoplasm. Functionally, the RecF protein is involved in DNA metabolism; it is required for DNA replication and normal SOS inducibility. RecF binds preferentially to single-stranded, linear DNA. It also seems to bind ATP. The chain is DNA replication and repair protein RecF from Yersinia enterocolitica serotype O:8 / biotype 1B (strain NCTC 13174 / 8081).